The primary structure comprises 442 residues: Probable protein phosphatase 2C 15 (442 aa).

One can recognise a PPM-type phosphatase domain in the interval 35–303; sequence AAERPELQVG…DDTTCIVVDI (269 aa). Mn(2+) is bound by residues aspartate 80, glycine 81, aspartate 255, and aspartate 294. Basic and acidic residues predominate over residues 420 to 434; the sequence is KKEAMEGKRRSRDSS. A disordered region spans residues 420-442; sequence KKEAMEGKRRSRDSSSRNSGSSE.

Belongs to the PP2C family. It depends on Mg(2+) as a cofactor. Mn(2+) serves as cofactor.

It catalyses the reaction O-phospho-L-seryl-[protein] + H2O = L-seryl-[protein] + phosphate. The catalysed reaction is O-phospho-L-threonyl-[protein] + H2O = L-threonyl-[protein] + phosphate. The protein is Probable protein phosphatase 2C 15 of Oryza sativa subsp. japonica (Rice).